The following is a 256-amino-acid chain: Minor capsid protein P7 (256 aa).

2 hydrophobic regions span residues Leu24–Lys44 and Thr47–Leu67. Cystine bridges form between Cys120–Cys134, Cys156–Cys172, and Cys188–Cys211.

In terms of assembly, interacts with the major capsid protein. Stabilized by 3 intramolecular disulfide bonds.

It is found in the virion. In terms of biological role, one of the minor capsid proteins that constitute a network internal to the major capsid proteins and outside the lipid membrane. The minor capsid proteins glue and stabilize the capsomers. The polypeptide is Minor capsid protein P7 (Paramecium bursaria Chlorella virus 1 (PBCV-1)).